Reading from the N-terminus, the 160-residue chain is Outer membrane protein MT2024.1 (160 aa).

An N-terminal signal peptide occupies residues 1–22 (MSWSRVIAYGLLPGLALALTCG).

It is found in the cell outer membrane. This is Outer membrane protein MT2024.1 from Mycobacterium tuberculosis (strain CDC 1551 / Oshkosh).